A 561-amino-acid polypeptide reads, in one-letter code: Methyl-accepting chemotaxis protein CtpM (561 aa).

Residues 1 to 11 (MMRLTLKSKVL) lie on the Cytoplasmic side of the membrane. The helical transmembrane segment at 12 to 32 (LLAMVPVLLFALVLSGGAVLI) threads the bilayer. Topologically, residues 33–205 (LKKQADAEVK…KQDIDERIGT (173 aa)) are periplasmic. A helical transmembrane segment spans residues 206 to 226 (LIASIVGIAGVLLVVLLVIGL). Residues 227–561 (AVANAMLRPL…LGRLVGQFRI (335 aa)) lie on the Cytoplasmic side of the membrane. The HAMP domain occupies 230–284 (NAMLRPLHQIRQNLDDIAAGEGDLTRRLPVTSYDELGELAGSFNRFVEKIHGLVR). The Methyl-accepting transducer domain occupies 289 to 525 (MTGDLKQLVE…EINRSVHQIA (237 aa)). Residues 333 to 357 (HEVAQSAQRAAEAAQQTDHEGQAAK) are disordered. Low complexity predominate over residues 336–348 (AQSAQRAAEAAQQ).

The protein belongs to the methyl-accepting chemotaxis (MCP) protein family. Homodimer. The ligand-binding domain (LBD) is dimeric in the presence and the absence of ligands.

It localises to the cell inner membrane. Chemotactic-signal transducers respond to changes in the concentration of attractants and repellents in the environment, transduce a signal from the outside to the inside of the cell, and facilitate sensory adaptation through the variation of the level of methylation. Directly recognizes five C4-dicarboxylic acids: L-malic, citramalic, citraconic, bromosuccinic and methylsuccinic acids. Three of the identified ligands act as chemoattractants (L-malic, D,L-bromosuccinic and L-citramalic acids) whereas two of them (L-methylsuccinic and citraconic acids) behave as antagonists by inhibiting the downstream chemotaxis signaling cascade. Antagonists compete with chemoattractants, thereby decreasing the affinity for chemoattractants and the subsequent chemotactic response. Acts through the che chemosensory pathway. This chain is Methyl-accepting chemotaxis protein CtpM, found in Pseudomonas aeruginosa (strain ATCC 15692 / DSM 22644 / CIP 104116 / JCM 14847 / LMG 12228 / 1C / PRS 101 / PAO1).